Consider the following 358-residue polypeptide: 3-dehydroquinate synthase (358 aa).

Residues glycine 104–aspartate 108, threonine 128–threonine 129, lysine 140, lysine 149, and phenylalanine 167–threonine 170 each bind NAD(+). 3 residues coordinate Zn(2+): glutamate 182, histidine 246, and histidine 260.

Belongs to the sugar phosphate cyclases superfamily. Dehydroquinate synthase family. It depends on Co(2+) as a cofactor. The cofactor is Zn(2+). NAD(+) is required as a cofactor.

The protein localises to the cytoplasm. It carries out the reaction 7-phospho-2-dehydro-3-deoxy-D-arabino-heptonate = 3-dehydroquinate + phosphate. The protein operates within metabolic intermediate biosynthesis; chorismate biosynthesis; chorismate from D-erythrose 4-phosphate and phosphoenolpyruvate: step 2/7. Catalyzes the conversion of 3-deoxy-D-arabino-heptulosonate 7-phosphate (DAHP) to dehydroquinate (DHQ). The polypeptide is 3-dehydroquinate synthase (Staphylococcus carnosus (strain TM300)).